The chain runs to 235 residues: Large ribosomal subunit protein uL1 (235 aa).

The protein belongs to the universal ribosomal protein uL1 family. As to quaternary structure, part of the 50S ribosomal subunit.

Binds directly to 23S rRNA. The L1 stalk is quite mobile in the ribosome, and is involved in E site tRNA release. Its function is as follows. Protein L1 is also a translational repressor protein, it controls the translation of the L11 operon by binding to its mRNA. This is Large ribosomal subunit protein uL1 from Mycolicibacterium vanbaalenii (strain DSM 7251 / JCM 13017 / BCRC 16820 / KCTC 9966 / NRRL B-24157 / PYR-1) (Mycobacterium vanbaalenii).